The sequence spans 726 residues: ORC ubiquitin ligase 1 (726 aa).

An RING-type; degenerate zinc finger spans residues 18–56 (CHICLGKVRQPVICINNHVFCSICIDLWLKNNSQCPACR). 2 coiled-coil regions span residues 87 to 129 (LRKT…TILD) and 155 to 270 (ETVA…MNSI). Serine 210 is subject to Phosphoserine. Disordered regions lie at residues 276–334 (SADG…TSKA) and 436–460 (NVSNKDSSEDDISRSENEKKSECFS). Basic and acidic residues predominate over residues 280-290 (KGSKGSEEDVV). A compositionally biased stretch (low complexity) spans 304–318 (SSTSSSSHLAKPSSS). Positions 319-334 (RLCDTSSARQESTSKA) are enriched in polar residues. A compositionally biased stretch (basic and acidic residues) spans 446 to 457 (DISRSENEKKSE). Phosphoserine occurs at positions 526, 553, 561, 568, and 570. Disordered regions lie at residues 570–602 (SSQGSEFLEEPDKLEEKTELNLSKGSLTNDQLE) and 687–726 (QSPWSTSFVPEKRNKNVNQSTKRKIQSSLSSASPSKATKS). Residues 579-588 (EPDKLEEKTE) show a composition bias toward basic and acidic residues. Polar residues predominate over residues 589-602 (LNLSKGSLTNDQLE). The span at 713–726 (SSLSSASPSKATKS) shows a compositional bias: low complexity. Phosphoserine occurs at positions 719 and 721.

In terms of assembly, associates with ORC complex. Binds to chromatin; association is cell cycle-regulated, absent from mitotic chromosomes, is associated with chromatin from G1 and partially released from chromatin from mid S-phase. Post-translationally, auto-ubiquitinated.

It is found in the chromosome. The catalysed reaction is S-ubiquitinyl-[E2 ubiquitin-conjugating enzyme]-L-cysteine + [acceptor protein]-L-lysine = [E2 ubiquitin-conjugating enzyme]-L-cysteine + N(6)-ubiquitinyl-[acceptor protein]-L-lysine.. Functionally, E3 ubiquitin ligase essential for DNA replication origin activation during S phase. Acts as a replication origin selector which selects the origins to be fired and catalyzes the multi-mono-ubiquitination of a subset of chromatin-bound ORC3 and ORC5 during S-phase. The polypeptide is ORC ubiquitin ligase 1 (Homo sapiens (Human)).